The following is a 196-amino-acid chain: GTP cyclohydrolase-2 (196 aa).

Residue 49–53 (RVHSE) coordinates GTP. Zn(2+) is bound by residues C54, C65, and C67. GTP is bound by residues Q70, 92–94 (EGR), and T114. D126 acts as the Proton acceptor in catalysis. R128 serves as the catalytic Nucleophile. The GTP site is built by T149 and K154.

This sequence belongs to the GTP cyclohydrolase II family. In terms of assembly, homodimer. Zn(2+) is required as a cofactor.

The catalysed reaction is GTP + 4 H2O = 2,5-diamino-6-hydroxy-4-(5-phosphoribosylamino)-pyrimidine + formate + 2 phosphate + 3 H(+). It functions in the pathway cofactor biosynthesis; riboflavin biosynthesis; 5-amino-6-(D-ribitylamino)uracil from GTP: step 1/4. In terms of biological role, catalyzes the conversion of GTP to 2,5-diamino-6-ribosylamino-4(3H)-pyrimidinone 5'-phosphate (DARP), formate and pyrophosphate. In Citrobacter koseri (strain ATCC BAA-895 / CDC 4225-83 / SGSC4696), this protein is GTP cyclohydrolase-2.